The chain runs to 194 residues: MSPNPSSTGPVIAPAPKGILDPATGRPIGANDPYFLEVRHELSDKGFFVATADDLITWARTGSLMWMTFGLACCAVEMMQVSMPRYDVERFGFAPRASPRQSDVMIVAGTLTNKMAPALRKVYDQMPEPRYVISMGSCANGGGYYHYSYSVVRGCDRIVPIDIYVPGCPPTAEALLYGVLLLQKKIRRTGTIER.

Cys-73, Cys-74, Cys-138, and Cys-168 together coordinate [4Fe-4S] cluster.

This sequence belongs to the complex I 20 kDa subunit family. As to quaternary structure, NDH-1 is composed of 14 different subunits. Subunits NuoB, C, D, E, F, and G constitute the peripheral sector of the complex. [4Fe-4S] cluster is required as a cofactor.

It is found in the cell inner membrane. It carries out the reaction a quinone + NADH + 5 H(+)(in) = a quinol + NAD(+) + 4 H(+)(out). In terms of biological role, NDH-1 shuttles electrons from NADH, via FMN and iron-sulfur (Fe-S) centers, to quinones in the respiratory chain. The immediate electron acceptor for the enzyme in this species is believed to be ubiquinone. Couples the redox reaction to proton translocation (for every two electrons transferred, four hydrogen ions are translocated across the cytoplasmic membrane), and thus conserves the redox energy in a proton gradient. The polypeptide is NADH-quinone oxidoreductase subunit B (Bradyrhizobium sp. (strain BTAi1 / ATCC BAA-1182)).